We begin with the raw amino-acid sequence, 210 residues long: Syntaxin-binding protein 6 (210 aa).

S2 carries the N-acetylserine modification. Residues G151–C210 form the v-SNARE coiled-coil homology domain.

In terms of assembly, part of a ternary complex containing SNAP25 and STX1A that can be dissociated by NAPA and NSF. Interacts with STX4A.

It is found in the cytoplasm. The protein localises to the membrane. In terms of biological role, forms non-fusogenic complexes with SNAP25 and STX1A and may thereby modulate the formation of functional SNARE complexes and exocytosis. This chain is Syntaxin-binding protein 6 (Stxbp6), found in Mus musculus (Mouse).